A 226-amino-acid polypeptide reads, in one-letter code: NifU-like protein 1, chloroplastic (226 aa).

The transit peptide at Met1 to Thr76 directs the protein to the chloroplast.

It belongs to the NifU family. Homodimer; disulfide-linked.

Its subcellular location is the plastid. It localises to the chloroplast stroma. Its function is as follows. Molecular scaffold for [Fe-S] cluster assembly of chloroplastic iron-sulfur proteins. The polypeptide is NifU-like protein 1, chloroplastic (NIFU1) (Oryza sativa subsp. japonica (Rice)).